The sequence spans 206 residues: MAQPLILGVSGASGLIYAVRAIKHLLAADYTIELVASRASYQVWQAEQNIQMPGEPSAQAEFWRSQAGVEKGGKLICHRWGDVGATIASGSYRCAGMVVLPCSMSTVAKLAVGMSSDLLERAADVQIKEGKPLVVVPRETPLSLIHLRNLTSLAEAGVRIVPAIPAWYHQPQSVEDLVDFVVARALDQLAIDCVPLQRWQGGMEGE.

Residues 11-13 (GAS), serine 37, 103-106 (SMST), and arginine 138 each bind FMN. Dimethylallyl phosphate is bound by residues tyrosine 168 and arginine 184.

This sequence belongs to the UbiX/PAD1 family.

The catalysed reaction is dimethylallyl phosphate + FMNH2 = prenylated FMNH2 + phosphate. Its function is as follows. Flavin prenyltransferase that catalyzes the synthesis of the prenylated FMN cofactor (prenyl-FMN) for 4-hydroxy-3-polyprenylbenzoic acid decarboxylase UbiD. The prenyltransferase is metal-independent and links a dimethylallyl moiety from dimethylallyl monophosphate (DMAP) to the flavin N5 and C6 atoms of FMN. This is Flavin prenyltransferase UbiX from Synechocystis sp. (strain ATCC 27184 / PCC 6803 / Kazusa).